The following is an 824-amino-acid chain: Probable ion channel POLLUX (824 aa).

Over residues 45-54 the composition is skewed to low complexity; it reads DGDDSSNLPT. The interval 45 to 70 is disordered; that stretch reads DGDDSSNLPTVPNPEEKPVPVPSQSP. Transmembrane regions (helical) follow at residues 81-101, 135-155, 198-218, and 250-270; these read FSLTHCLKFICSCSFTYVMFL, AVVFFSVIITFVLPFLLYMYL, LALLLATVVLIVYGGLALYAV, and IVSVAISAGGMLIFATMLGLI. RCK N-terminal domains follow at residues 291 to 432 and 550 to 699; these read SNHI…ETVV and PEKI…DKSI. Residues 325-346 adopt a coiled-coil conformation; that stretch reads LAERDKEEMETDIAKFEFDLMG.

The protein belongs to the castor/pollux (TC 1.A.1.23) family.

The protein localises to the nucleus membrane. The protein is Probable ion channel POLLUX of Arabidopsis thaliana (Mouse-ear cress).